A 223-amino-acid chain; its full sequence is Phosphoribosylformylglycinamidine synthase subunit PurQ (223 aa).

The Glutamine amidotransferase type-1 domain maps to 3-223 (FAVLVFPGSN…MVKSWREQHV (221 aa)). The Nucleophile role is filled by Cys-85. Catalysis depends on residues His-193 and Glu-195.

As to quaternary structure, part of the FGAM synthase complex composed of 1 PurL, 1 PurQ and 2 PurS subunits.

The protein resides in the cytoplasm. It carries out the reaction N(2)-formyl-N(1)-(5-phospho-beta-D-ribosyl)glycinamide + L-glutamine + ATP + H2O = 2-formamido-N(1)-(5-O-phospho-beta-D-ribosyl)acetamidine + L-glutamate + ADP + phosphate + H(+). The enzyme catalyses L-glutamine + H2O = L-glutamate + NH4(+). It functions in the pathway purine metabolism; IMP biosynthesis via de novo pathway; 5-amino-1-(5-phospho-D-ribosyl)imidazole from N(2)-formyl-N(1)-(5-phospho-D-ribosyl)glycinamide: step 1/2. Part of the phosphoribosylformylglycinamidine synthase complex involved in the purines biosynthetic pathway. Catalyzes the ATP-dependent conversion of formylglycinamide ribonucleotide (FGAR) and glutamine to yield formylglycinamidine ribonucleotide (FGAM) and glutamate. The FGAM synthase complex is composed of three subunits. PurQ produces an ammonia molecule by converting glutamine to glutamate. PurL transfers the ammonia molecule to FGAR to form FGAM in an ATP-dependent manner. PurS interacts with PurQ and PurL and is thought to assist in the transfer of the ammonia molecule from PurQ to PurL. This chain is Phosphoribosylformylglycinamidine synthase subunit PurQ, found in Staphylococcus aureus (strain bovine RF122 / ET3-1).